The primary structure comprises 333 residues: Glycerol-3-phosphate dehydrogenase [NAD(P)+] (333 aa).

5 residues coordinate NADPH: S10, W11, H31, R32, and K105. Sn-glycerol 3-phosphate is bound by residues K105, G136, and S138. A140 is an NADPH binding site. Sn-glycerol 3-phosphate contacts are provided by K191, D244, S254, R255, and N256. The active-site Proton acceptor is K191. R255 provides a ligand contact to NADPH. The NADPH site is built by I279 and E281.

This sequence belongs to the NAD-dependent glycerol-3-phosphate dehydrogenase family.

Its subcellular location is the cytoplasm. It catalyses the reaction sn-glycerol 3-phosphate + NAD(+) = dihydroxyacetone phosphate + NADH + H(+). It carries out the reaction sn-glycerol 3-phosphate + NADP(+) = dihydroxyacetone phosphate + NADPH + H(+). Its pathway is membrane lipid metabolism; glycerophospholipid metabolism. In terms of biological role, catalyzes the reduction of the glycolytic intermediate dihydroxyacetone phosphate (DHAP) to sn-glycerol 3-phosphate (G3P), the key precursor for phospholipid synthesis. This is Glycerol-3-phosphate dehydrogenase [NAD(P)+] from Chlorobium luteolum (strain DSM 273 / BCRC 81028 / 2530) (Pelodictyon luteolum).